The following is an 88-amino-acid chain: Small ribosomal subunit protein bS20 (88 aa).

Residues M1 to R16 are compositionally biased toward basic residues. Residues M1 to V20 form a disordered region.

The protein belongs to the bacterial ribosomal protein bS20 family.

Functionally, binds directly to 16S ribosomal RNA. This chain is Small ribosomal subunit protein bS20, found in Nitrobacter hamburgensis (strain DSM 10229 / NCIMB 13809 / X14).